Consider the following 790-residue polypeptide: Probable phosphoketolase (790 aa).

This sequence belongs to the XFP family. It depends on thiamine diphosphate as a cofactor.

This Nitrosomonas europaea (strain ATCC 19718 / CIP 103999 / KCTC 2705 / NBRC 14298) protein is Probable phosphoketolase.